Here is a 437-residue protein sequence, read N- to C-terminus: MAAPSWRGARLVQSVLRVWQVGPHVARERVIPFSSLLGFQRRCVSCVAGSAFSGPRLASASRSNGQGSALDHFLGFSQPDSSVTPCVPAVSMNRDEQDVLLVHHPDMPENSRVLRVVLLGAPNAGKSTLSNQLLGRKVFPVSRKVHTTRCQALGVITEKETQVILLDTPGIISPGKQKRHHLELSLLEDPWKSMESADLVVVLVDVSDKWTRNQLSPQLLRCLTKYSQIPSVLVMNKVDCLKQKSVLLELTAALTEGVVNGKKLKMRQAFHSHPGTHCPSPAVKDPNTQSVGNPQRIGWPHFKEIFMLSALSQEDVKTLKQYLLTQAQPGPWEYHSAVLTSQTPEEICANIIREKLLEHLPQEVPYNVQQKTAVWEEGPGGELVIQQKLLVPKESYVKLLIGPKGHVISQIAQEAGHDLMDIFLCDVDIRLSVKLLK.

Residues 1 to 43 (MAAPSWRGARLVQSVLRVWQVGPHVARERVIPFSSLLGFQRRC) constitute a mitochondrion transit peptide. The Era-type G domain occupies 112 to 330 (RVLRVVLLGA…QYLLTQAQPG (219 aa)). The segment at 120 to 127 (GAPNAGKS) is G1. 120–127 (GAPNAGKS) provides a ligand contact to GTP. The tract at residues 146-150 (HTTRC) is G2. Residues 167–170 (DTPG) form a G3 region. A GTP-binding site is contributed by 167–171 (DTPGI). Ser-173 is subject to Phosphoserine. Position 236–239 (236–239 (NKVD)) interacts with GTP. The interval 236–239 (NKVD) is G4. Positions 271 to 290 (HSHPGTHCPSPAVKDPNTQS) are disordered. Positions 308–310 (LSA) are G5. One can recognise a KH type-2 domain in the interval 360–437 (LPQEVPYNVQ…DIRLSVKLLK (78 aa)).

This sequence belongs to the TRAFAC class TrmE-Era-EngA-EngB-Septin-like GTPase superfamily. Era GTPase family.

The protein resides in the mitochondrion matrix. The protein localises to the mitochondrion inner membrane. Its function is as follows. Probable GTPase that plays a role in the mitochondrial ribosomal small subunit assembly. Specifically binds the 12S mitochondrial rRNA (12S mt-rRNA) to a 33 nucleotide section delineating the 3' terminal stem-loop region. May act as a chaperone that protects the 12S mt-rRNA on the 28S mitoribosomal subunit during ribosomal small subunit assembly. The sequence is that of GTPase Era, mitochondrial (ERAL1) from Homo sapiens (Human).